Consider the following 233-residue polypeptide: Low affinity immunoglobulin gamma Fc region receptor III-B (233 aa).

The signal sequence occupies residues 1-16; the sequence is MWQLLLPTALLLLVSA. Ig-like C2-type domains are found at residues 40–96 and 121–179; these read KDSV…LSTL and EDPI…VGSK. A disulfide bridge links Cys-47 with Cys-89. Asn-56, Asn-63, Asn-82, and Asn-92 each carry an N-linked (GlcNAc...) asparagine glycan. Residues Cys-128 and Cys-172 are joined by a disulfide bond. Asn-180 and Asn-187 each carry an N-linked (GlcNAc...) asparagine glycan. A lipid anchor (GPI-anchor amidated serine) is attached at Ser-200. Residues 201–233 constitute a propeptide, removed in mature form; that stretch reads SFSPPGYQVSFCLVMVLLFAVDTGLYFSVKTNI.

Monomer. Interacts with INPP5D/SHIP1. Post-translationally, glycosylated. Glycosylation plays an inhibitory role in the interaction with IgG3. The soluble form is produced by a proteolytic cleavage. Expressed specifically by polymorphonuclear leukocytes (neutrophils). Also expressed by stimulated eosinophils.

The protein localises to the cell membrane. It is found in the secreted. Functionally, receptor for the Fc region of immunoglobulins gamma. Low affinity receptor. Binds complexed or aggregated IgG and also monomeric IgG. Contrary to III-A, is not capable to mediate antibody-dependent cytotoxicity and phagocytosis. May serve as a trap for immune complexes in the peripheral circulation which does not activate neutrophils. In Homo sapiens (Human), this protein is Low affinity immunoglobulin gamma Fc region receptor III-B (FCGR3B).